Here is a 301-residue protein sequence, read N- to C-terminus: Acetylglutamate kinase (301 aa).

Substrate contacts are provided by residues 70–71, Arg-92, and Asn-185; that span reads GG.

The protein belongs to the acetylglutamate kinase family. ArgB subfamily.

Its subcellular location is the cytoplasm. It catalyses the reaction N-acetyl-L-glutamate + ATP = N-acetyl-L-glutamyl 5-phosphate + ADP. It participates in amino-acid biosynthesis; L-arginine biosynthesis; N(2)-acetyl-L-ornithine from L-glutamate: step 2/4. In terms of biological role, catalyzes the ATP-dependent phosphorylation of N-acetyl-L-glutamate. This is Acetylglutamate kinase from Synechococcus elongatus (strain ATCC 33912 / PCC 7942 / FACHB-805) (Anacystis nidulans R2).